Consider the following 611-residue polypeptide: Actin-interacting protein 1 (611 aa).

WD repeat units lie at residues 57 to 96 (EHSHQTTVAKTSPSGYYCASGDVHGNVRIWDTTQTTHILK), 145 to 185 (GQAR…FKST), 188 to 227 (EHTKFVHSVRYNPDGSLFASTGGDGTIVLYNGVDGTKTGV), 237 to 276 (AHSGSVFGLTWSPDGTKIASASADKTIKIWNVATLKVEKT), 322 to 361 (GHNKAITALSSSADGKTLFSADAEGHINSWDISTGISNRV), 446 to 485 (PISYNSSCVALSNDKQFVAVGGQDSKVHVYKLSGASVSEV), 489 to 528 (VHPAEITSVAFSNNGAFLVATDQSRKVIPYSVANNFELAH), 534 to 573 (FHTAKVACVSWSPDNVRLATGSLDNSVIVWNMNKPSDHPI), and 579 to 610 (HAMSSVNSVIWLNETTIVSAGQDSNIKFWNVP).

This sequence belongs to the WD repeat AIP1 family.

The protein resides in the cytoplasm. The protein localises to the cytoskeleton. In terms of biological role, induces disassembly of actin filaments in conjunction with ADF/cofilin family proteins. Regulator of actin organization in myofibrils. The protein is Actin-interacting protein 1 (unc-78) of Caenorhabditis elegans.